A 247-amino-acid chain; its full sequence is Uridylate kinase (247 aa).

18–21 (KLSG) is a binding site for ATP. Position 60 (Gly-60) interacts with UMP. ATP-binding residues include Gly-61 and Arg-65. Residues Asp-80 and 141–148 (TGNPFFTT) contribute to the UMP site. The ATP site is built by Thr-168, Tyr-174, and Asp-177.

The protein belongs to the UMP kinase family. Homohexamer.

It localises to the cytoplasm. The enzyme catalyses UMP + ATP = UDP + ADP. Its pathway is pyrimidine metabolism; CTP biosynthesis via de novo pathway; UDP from UMP (UMPK route): step 1/1. Inhibited by UTP. Its function is as follows. Catalyzes the reversible phosphorylation of UMP to UDP. The polypeptide is Uridylate kinase (Pseudomonas putida (strain ATCC 47054 / DSM 6125 / CFBP 8728 / NCIMB 11950 / KT2440)).